A 425-amino-acid polypeptide reads, in one-letter code: Pre-mRNA-splicing factor PRP46 (425 aa).

7 WD repeats span residues 111 to 151, 154 to 193, 196 to 235, 238 to 279, 281 to 320, 322 to 360, and 371 to 410; these read GHTG…LKVT, GHIM…VVRD, GTLS…CVLT, GHRG…KTLT, HKRN…TNFN, EALG…KFQK, and ESEK…TQDS.

This sequence belongs to the WD repeat PRL1/PRL2 family. As to quaternary structure, associated with the spliceosome.

It is found in the cytoplasm. It localises to the nucleus. In terms of biological role, involved in pre-mRNA splicing and required for cell cycle progression at G2/M. This Eremothecium gossypii (strain ATCC 10895 / CBS 109.51 / FGSC 9923 / NRRL Y-1056) (Yeast) protein is Pre-mRNA-splicing factor PRP46 (PRP46).